Consider the following 351-residue polypeptide: Transmembrane protein 185-like (351 aa).

Transmembrane regions (helical) follow at residues 16–36 (LIYA…DGII), 41–61 (WAVF…ASVG), 81–101 (FKAM…EVLV), 113–133 (WLLV…ACVW), 154–174 (FIFI…VVCV), 178–198 (ILMS…VLFL), 212–232 (ITMA…EILL), and 244–264 (YVPV…TTFG).

It belongs to the TMEM185 family.

The protein localises to the membrane. The protein is Transmembrane protein 185-like of Danio rerio (Zebrafish).